Reading from the N-terminus, the 219-residue chain is Cytidylate kinase (219 aa).

G10–T18 contributes to the ATP binding site.

Belongs to the cytidylate kinase family. Type 1 subfamily.

Its subcellular location is the cytoplasm. It catalyses the reaction CMP + ATP = CDP + ADP. The catalysed reaction is dCMP + ATP = dCDP + ADP. This is Cytidylate kinase from Staphylococcus saprophyticus subsp. saprophyticus (strain ATCC 15305 / DSM 20229 / NCIMB 8711 / NCTC 7292 / S-41).